A 438-amino-acid polypeptide reads, in one-letter code: MHIAVVGLSHRTAPVEVREKLSIPEQTMEESLQNLRGHDQVLEASILSTCNRLEIYTLVRNPELGISAVREFLSSHSGLETGDLKPHLFAYHHEDAVGHLLRVAAGLDSLVLGEGQILSQVKKMMRLGQEHKSLGPILNRLLTQAVSTGKRVRSETNLGTGAVSISSAAVELAQLKLGQSRGLDELVTLEDEQVAVVGAGRMSRLLLQHLQAKGASGVVVLNRTVARAEALAADFPTLPVQCRPLKDLDHCLSTCSLIFTSTAADDPIIDAERLSKLNRRSSLRLIDIGVPRNIAADVEGIGGVDAHDVDDLKEVVERNQEARQQVAREAQGLLDGEARQFLEWWDSLEAVPTINRLRSSMESIRSEELMKALSRMGPDFSARERKVVEALSKGIINKILHTPVTALRSPQPRSDRQNALSVVERLFDLQADEDSVQN.

Substrate contacts are provided by residues 49–52 (TCNR), serine 109, 114–116 (EGQ), and glutamine 120. Cysteine 50 (nucleophile) is an active-site residue. Position 198 to 203 (198 to 203 (GAGRMS)) interacts with NADP(+).

It belongs to the glutamyl-tRNA reductase family. Homodimer.

The catalysed reaction is (S)-4-amino-5-oxopentanoate + tRNA(Glu) + NADP(+) = L-glutamyl-tRNA(Glu) + NADPH + H(+). It functions in the pathway porphyrin-containing compound metabolism; protoporphyrin-IX biosynthesis; 5-aminolevulinate from L-glutamyl-tRNA(Glu): step 1/2. Its pathway is porphyrin-containing compound metabolism; chlorophyll biosynthesis. Catalyzes the NADPH-dependent reduction of glutamyl-tRNA(Glu) to glutamate 1-semialdehyde (GSA). The chain is Glutamyl-tRNA reductase from Synechococcus sp. (strain WH7803).